The sequence spans 487 residues: Solute carrier family 22 member 15-like (487 aa).

A helical membrane pass occupies residues Phe-23–Ala-43. Asn-70 is a glycosylation site (N-linked (GlcNAc...) asparagine). 11 consecutive transmembrane segments (helical) span residues Leu-90–Ser-110, Pro-117–Pro-137, Val-141–Phe-161, Ser-178–Ile-198, Thr-203–Pro-223, Ile-286–Ala-306, Leu-315–Ile-335, Ala-345–Glu-365, Thr-374–Tyr-394, Leu-408–Met-428, and Met-435–Pro-455.

It belongs to the major facilitator (TC 2.A.1) superfamily. Organic cation transporter (TC 2.A.1.19) family.

It is found in the membrane. Probably transports organic cations. In Xenopus laevis (African clawed frog), this protein is Solute carrier family 22 member 15-like (slc22a15b).